A 344-amino-acid polypeptide reads, in one-letter code: uncharacterized protein (344 aa).

The protein belongs to the MG414/MG415 family.

This is an uncharacterized protein from Mycoplasma pneumoniae (strain ATCC 29342 / M129 / Subtype 1) (Mycoplasmoides pneumoniae).